Consider the following 160-residue polypeptide: Cytosolic iron-sulfur assembly component 2A (160 aa).

Residues histidine 89, histidine 123, glutamate 150, and glutamate 153 each contribute to the Zn(2+) site.

This sequence belongs to the MIP18 family. As to quaternary structure, monomer and homodimer. Component of the CIA complex. Interacts with CIAO1. Interacts with IREB2. Interacts with APAF1.

The protein localises to the cytoplasm. Its function is as follows. Component of the cytosolic iron-sulfur protein assembly (CIA) complex, a multiprotein complex that mediates the incorporation of iron-sulfur cluster into extramitochondrial Fe/S proteins. As a CIA complex component and in collaboration with CIAO1 specifically matures ACO1 and stabilizes IREB2, connecting cytosolic iron-sulfur protein maturation with cellular iron regulation. May play a role in chromosome segregation through establishment of sister chromatid cohesion. May induce apoptosis in collaboration with APAF1. The polypeptide is Cytosolic iron-sulfur assembly component 2A (Bos taurus (Bovine)).